Reading from the N-terminus, the 156-residue chain is ATP synthase subunit b (156 aa).

A helical transmembrane segment spans residues 7 to 26 (FIGQMVAFAIFIYLTYRYVW).

This sequence belongs to the ATPase B chain family. As to quaternary structure, F-type ATPases have 2 components, F(1) - the catalytic core - and F(0) - the membrane proton channel. F(1) has five subunits: alpha(3), beta(3), gamma(1), delta(1), epsilon(1). F(0) has three main subunits: a(1), b(2) and c(10-14). The alpha and beta chains form an alternating ring which encloses part of the gamma chain. F(1) is attached to F(0) by a central stalk formed by the gamma and epsilon chains, while a peripheral stalk is formed by the delta and b chains.

It is found in the cell inner membrane. Functionally, f(1)F(0) ATP synthase produces ATP from ADP in the presence of a proton or sodium gradient. F-type ATPases consist of two structural domains, F(1) containing the extramembraneous catalytic core and F(0) containing the membrane proton channel, linked together by a central stalk and a peripheral stalk. During catalysis, ATP synthesis in the catalytic domain of F(1) is coupled via a rotary mechanism of the central stalk subunits to proton translocation. Component of the F(0) channel, it forms part of the peripheral stalk, linking F(1) to F(0). The protein is ATP synthase subunit b of Cellvibrio japonicus (strain Ueda107) (Pseudomonas fluorescens subsp. cellulosa).